The sequence spans 289 residues: N-acetylmuramoyl-L-alanine amidase AmiA (289 aa).

Residues 1–34 (MSTFKLLKTLTSRRQVLKTGLAALTLSGMSHAVA) constitute a signal peptide (tat-type signal). The tract at residues 36 to 61 (EETLKTSNGHSKPKTKKTGSKRLVML) is disordered. Basic residues predominate over residues 46–55 (SKPKTKKTGS). The MurNAc-LAA domain maps to 59–273 (VMLDPGHGGI…IATAIANGII (215 aa)).

It belongs to the N-acetylmuramoyl-L-alanine amidase 3 family. Post-translationally, predicted to be exported by the Tat system. The position of the signal peptide cleavage has not been experimentally proven.

It localises to the periplasm. It carries out the reaction Hydrolyzes the link between N-acetylmuramoyl residues and L-amino acid residues in certain cell-wall glycopeptides.. In terms of biological role, cell-wall hydrolase involved in septum cleavage during cell division. In Salmonella typhimurium (strain LT2 / SGSC1412 / ATCC 700720), this protein is N-acetylmuramoyl-L-alanine amidase AmiA (amiA).